A 78-amino-acid chain; its full sequence is DNA-directed RNA polymerase subunit Rpo5 (78 aa).

Belongs to the archaeal Rpo5/eukaryotic RPB5 RNA polymerase subunit family. Part of the RNA polymerase complex.

It is found in the cytoplasm. It catalyses the reaction RNA(n) + a ribonucleoside 5'-triphosphate = RNA(n+1) + diphosphate. DNA-dependent RNA polymerase (RNAP) catalyzes the transcription of DNA into RNA using the four ribonucleoside triphosphates as substrates. The protein is DNA-directed RNA polymerase subunit Rpo5 of Methanosarcina acetivorans (strain ATCC 35395 / DSM 2834 / JCM 12185 / C2A).